The primary structure comprises 356 residues: Nuclear hormone receptor family member nhr-42 (356 aa).

Residues 7-82 constitute a DNA-binding region (nuclear receptor); it reads SQTCLICGDS…VGMRESAVLS (76 aa). An NR C4-type zinc finger spans residues 10–30; that stretch reads CLICGDSADSLHFGALSCRAC. Residues 48 to 70 form an NR C4-type; atypical zinc finger; the sequence is CDRQCKVDTGMRKLCASCRYDKC. Residues 108–356 form the NR LBD domain; sequence TSDSVLENLQ…HSSIFGNMAE (249 aa).

Belongs to the nuclear hormone receptor family.

Its subcellular location is the nucleus. Its function is as follows. Orphan nuclear receptor. The chain is Nuclear hormone receptor family member nhr-42 (nhr-42) from Caenorhabditis elegans.